We begin with the raw amino-acid sequence, 73 residues long: Translation initiation factor IF-1 (73 aa).

The region spanning 1-72 (MSKKDVIELE…SRGRIVYRKK (72 aa)) is the S1-like domain.

It belongs to the IF-1 family. Component of the 30S ribosomal translation pre-initiation complex which assembles on the 30S ribosome in the order IF-2 and IF-3, IF-1 and N-formylmethionyl-tRNA(fMet); mRNA recruitment can occur at any time during PIC assembly.

It is found in the cytoplasm. Functionally, one of the essential components for the initiation of protein synthesis. Stabilizes the binding of IF-2 and IF-3 on the 30S subunit to which N-formylmethionyl-tRNA(fMet) subsequently binds. Helps modulate mRNA selection, yielding the 30S pre-initiation complex (PIC). Upon addition of the 50S ribosomal subunit IF-1, IF-2 and IF-3 are released leaving the mature 70S translation initiation complex. This chain is Translation initiation factor IF-1, found in Fusobacterium nucleatum subsp. nucleatum (strain ATCC 25586 / DSM 15643 / BCRC 10681 / CIP 101130 / JCM 8532 / KCTC 2640 / LMG 13131 / VPI 4355).